The sequence spans 377 residues: GDP-mannose 3,5-epimerase (377 aa).

Gly-2 is subject to N-acetylglycine. Residues 34-60 (GAGG…SDWK), Asp-58, and Asp-78 each bind NAD(+). Residues Gly-103 and 143-145 (SAC) contribute to the substrate site. NAD(+)-binding residues include Tyr-174 and Lys-178. The Proton acceptor role is filled by Tyr-174. Substrate is bound by residues Asn-203, 216 to 218 (EKA), Lys-225, 241 to 243 (QTR), Arg-306, and Ser-356. Position 369 is a phosphoserine (Ser-369).

Belongs to the NAD(P)-dependent epimerase/dehydratase family. As to quaternary structure, homodimer. Interacts with chaperone Hsc70-3 protein, which may regulate epimerase activity. It depends on NAD(+) as a cofactor.

The enzyme catalyses GDP-alpha-D-mannose = GDP-beta-L-gulose. It carries out the reaction GDP-beta-L-gulose = GDP-beta-L-galactose. Its pathway is cofactor biosynthesis; L-ascorbate biosynthesis via GDP-alpha-D-mannose pathway; L-ascorbate from GDP-alpha-D-mannose: step 1/5. With respect to regulation, inhibited by GDP and GDP-D-glucose. Catalyzes a reversible epimerization of GDP-D-mannose that precedes the committed step in the biosynthesis of vitamin C (L-ascorbate), resulting in the hydrolysis of the highly energetic glycosyl-pyrophosphoryl linkage. Able to catalyze 2 distinct epimerization reactions and can release both GDP-L-galactose and GDP-L-gulose from GDP-mannose. In Arabidopsis thaliana (Mouse-ear cress), this protein is GDP-mannose 3,5-epimerase.